We begin with the raw amino-acid sequence, 424 residues long: Enolase (424 aa).

Gln165 contributes to the (2R)-2-phosphoglycerate binding site. The active-site Proton donor is Glu207. Asp244, Glu283, and Asp310 together coordinate Mg(2+). (2R)-2-phosphoglycerate-binding residues include Lys335, Arg364, Ser365, and Lys386. The active-site Proton acceptor is Lys335.

Belongs to the enolase family. Mg(2+) serves as cofactor.

It is found in the cytoplasm. Its subcellular location is the secreted. The protein localises to the cell surface. The catalysed reaction is (2R)-2-phosphoglycerate = phosphoenolpyruvate + H2O. It participates in carbohydrate degradation; glycolysis; pyruvate from D-glyceraldehyde 3-phosphate: step 4/5. Functionally, catalyzes the reversible conversion of 2-phosphoglycerate (2-PG) into phosphoenolpyruvate (PEP). It is essential for the degradation of carbohydrates via glycolysis. This chain is Enolase, found in Chlamydia muridarum (strain MoPn / Nigg).